Consider the following 777-residue polypeptide: Endonuclease MutS2 (777 aa).

328–335 (GPNTGGKT) is a binding site for ATP. The 76-residue stretch at 702-777 (LDLRGKRYEE…GSGATIVIFK (76 aa)) folds into the Smr domain.

Belongs to the DNA mismatch repair MutS family. MutS2 subfamily. In terms of assembly, homodimer. Binds to stalled ribosomes, contacting rRNA.

Functionally, endonuclease that is involved in the suppression of homologous recombination and thus may have a key role in the control of bacterial genetic diversity. Acts as a ribosome collision sensor, splitting the ribosome into its 2 subunits. Detects stalled/collided 70S ribosomes which it binds and splits by an ATP-hydrolysis driven conformational change. Acts upstream of the ribosome quality control system (RQC), a ribosome-associated complex that mediates the extraction of incompletely synthesized nascent chains from stalled ribosomes and their subsequent degradation. Probably generates substrates for RQC. This Streptococcus gordonii (strain Challis / ATCC 35105 / BCRC 15272 / CH1 / DL1 / V288) protein is Endonuclease MutS2.